The sequence spans 168 residues: Small ribosomal subunit protein uS5 (168 aa).

Positions 12 to 75 constitute an S5 DRBM domain; that stretch reads YQEKLVSVTR…DQAKKNMVYI (64 aa).

It belongs to the universal ribosomal protein uS5 family. As to quaternary structure, part of the 30S ribosomal subunit. Contacts proteins S4 and S8.

Functionally, with S4 and S12 plays an important role in translational accuracy. Its function is as follows. Located at the back of the 30S subunit body where it stabilizes the conformation of the head with respect to the body. In Legionella pneumophila (strain Paris), this protein is Small ribosomal subunit protein uS5.